A 1079-amino-acid chain; its full sequence is Capping protein inhibiting regulator of actin dynamics (1079 aa).

A compositionally biased stretch (basic and acidic residues) spans 1 to 11 (MSQENVSDKVR). Disordered stretches follow at residues 1 to 293 (MSQE…EEER), 308 to 327 (ERKR…AEKR), 341 to 383 (EHRI…EWKR), 420 to 453 (PVTP…PTLS), 493 to 522 (EGKK…VFES), 606 to 639 (IFGQ…VQSR), and 658 to 1054 (PSFL…TTQV). Residues 36–45 (DEGSSDEEEV) are compositionally biased toward acidic residues. Over residues 64–76 (SAKEKSVSHDTVQ) the composition is skewed to basic and acidic residues. The span at 115–134 (AKHKLSVKPKNQRVSRKHRR) shows a compositional bias: basic residues. Acidic residues predominate over residues 140 to 158 (HEDDFSEIQEEFEKDEEVF). Positions 159 to 293 (DSSREDYGII…EERKRAEEER (135 aa)) are enriched in basic and acidic residues. Positions 420-434 (PVTPATGQQGETTAE) are enriched in polar residues. A compositionally biased stretch (polar residues) spans 670–682 (PKSQRSESGSPIQ). A compositionally biased stretch (acidic residues) spans 684–695 (ESEDSDTKDEDG). The segment covering 756-781 (DNSTLSEKSSPISPQQENIEFQTTVA) has biased composition (polar residues). Basic and acidic residues-rich tracts occupy residues 896–930 (WREK…DKET) and 944–983 (GFRE…EDKG). The span at 984 to 993 (NGSSSIISKH) shows a compositional bias: polar residues. Residues 994-1016 (QTADENKRPDTLLARFERRDNLK) are compositionally biased toward basic and acidic residues. Positions 1020–1033 (TLPSSVTVEITDST) are enriched in polar residues.

In terms of assembly, directly interacts with actin-capping proteins; this interaction decreases the binding of capping proteins to actin.

The protein localises to the cytoplasm. It localises to the cytosol. Functionally, involved in epithelial cell integrity by acting on the maintenance of the actin cytoskeleton. Positively regulates the actin polymerization, by inhibiting the interaction of actin-capping proteins with actin. This chain is Capping protein inhibiting regulator of actin dynamics (crad), found in Danio rerio (Zebrafish).